Reading from the N-terminus, the 519-residue chain is uncharacterized protein (519 aa).

Helical transmembrane passes span 19 to 39 (FSSSVWSIVPALLAIILAIAT), 42 to 62 (VLVSLSAGIIIGSLMLSDWQI), 87 to 107 (MNIVLFLLLLGVLTALLTVSG), 128 to 148 (LLAASLVFVTFIDDYFHSLAV), 179 to 199 (VMMPVSSWGAYIITLIGGLLA), 220 to 240 (FYAIFSIIMVFFVAYFSFDIA), 270 to 290 (LILPILVLIIATVSMMIYTGA), 311 to 331 (VGTSLVVGGFCSIIISTLLII), 345 to 365 (WIVGIKSMSGAIAILFFAWTI), 386 to 406 (IPMQFLPVILFVLGAAMAFST), 413 to 433 (FGIMLPIAAAMAANAAPELLL), 475 to 495 (LPYAATVATATSIGYIVVGFT), and 496 to 516 (YSGLAGFAATAVSLIVIIFAV).

The protein resides in the cell membrane. This is an uncharacterized protein from Haemophilus influenzae (strain ATCC 51907 / DSM 11121 / KW20 / Rd).